Consider the following 421-residue polypeptide: ATP-dependent RNA helicase RhlB (421 aa).

Positions 9–37 (QKFSDFALHPAVIEALEKKGFHNCTPIQA) match the Q motif motif. Residues 40-219 (LPLTLEGRDV…FEQMNNAEYV (180 aa)) enclose the Helicase ATP-binding domain. 53–60 (AQTGTGKT) serves as a coordination point for ATP. The DEAD box signature appears at 165 to 168 (DEAD). The 146-residue stretch at 245-390 (RLLQTLLEEE…VSKYNPDALM (146 aa)) folds into the Helicase C-terminal domain. The segment at 396-421 (PLRLTRARPGNGPRRNGPPRNRRRSG) is disordered. Residues 403-414 (RPGNGPRRNGPP) are compositionally biased toward low complexity.

This sequence belongs to the DEAD box helicase family. RhlB subfamily. Component of the RNA degradosome, which is a multiprotein complex involved in RNA processing and mRNA degradation.

The protein localises to the cytoplasm. It catalyses the reaction ATP + H2O = ADP + phosphate + H(+). In terms of biological role, DEAD-box RNA helicase involved in RNA degradation. Has RNA-dependent ATPase activity and unwinds double-stranded RNA. This Klebsiella pneumoniae subsp. pneumoniae (strain ATCC 700721 / MGH 78578) protein is ATP-dependent RNA helicase RhlB.